The following is a 367-amino-acid chain: Glutamate 5-kinase (367 aa).

Residue K10 participates in ATP binding. Substrate contacts are provided by S50, D137, and N149. Residues 169–170 (TD) and 211–217 (TGGMSTK) contribute to the ATP site. Positions 275-353 (AGEITVDEGA…QQIDAILGYE (79 aa)) constitute a PUA domain.

The protein belongs to the glutamate 5-kinase family.

It is found in the cytoplasm. It catalyses the reaction L-glutamate + ATP = L-glutamyl 5-phosphate + ADP. It participates in amino-acid biosynthesis; L-proline biosynthesis; L-glutamate 5-semialdehyde from L-glutamate: step 1/2. Functionally, catalyzes the transfer of a phosphate group to glutamate to form L-glutamate 5-phosphate. The sequence is that of Glutamate 5-kinase from Salmonella paratyphi A (strain ATCC 9150 / SARB42).